A 149-amino-acid chain; its full sequence is Deoxyuridine 5'-triphosphate nucleotidohydrolase (149 aa).

Substrate-binding positions include 68–70 (RSG), Asn81, and 85–87 (LID).

Belongs to the dUTPase family. Mg(2+) is required as a cofactor.

The enzyme catalyses dUTP + H2O = dUMP + diphosphate + H(+). Its pathway is pyrimidine metabolism; dUMP biosynthesis; dUMP from dCTP (dUTP route): step 2/2. Functionally, this enzyme is involved in nucleotide metabolism: it produces dUMP, the immediate precursor of thymidine nucleotides and it decreases the intracellular concentration of dUTP so that uracil cannot be incorporated into DNA. The protein is Deoxyuridine 5'-triphosphate nucleotidohydrolase of Nitrosomonas eutropha (strain DSM 101675 / C91 / Nm57).